The chain runs to 546 residues: Nicotinic acid-CoA ligase olcI (546 aa).

An AMP-binding site is contributed by 194–205 (MFSTSGTSGLPK). Residues 445–523 (EIEAVLLKDP…ESLPRTGIGK (79 aa)) are AMP-binding.

Belongs to the ATP-dependent AMP-binding enzyme family.

It carries out the reaction nicotinate + ATP + CoA = nicotinyl-CoA + AMP + diphosphate. It participates in secondary metabolite biosynthesis; terpenoid biosynthesis. Nicotinic acid-CoA ligase; part of the gene cluster that mediates the biosynthesis of 15-deoxyoxalicine B. The first step of the pathway is the synthesis of nicotinyl-CoA from nicotinic acid by the nicotinic acid-CoA ligase olcI. Nicotinyl-CoA is then a substrate of polyketide synthase olcA to produce 4-hydroxy-6-(3-pyridinyl)-2H-pyran-2-one (HPPO) which is further prenylated by the polyprenyl transferase olcH to yield geranylgeranyl-HPPO. Geranylgeranyl pyrophosphate is provided by the cluster-specific geranylgeranyl pyrophosphate synthase olcC. The FAD-dependent monooxygenase olcE catalyzes the epoxidation of geranylgeranyl-HPPO and the terpene cyclase olcD catalyzes the cyclization of the terpenoid component, resulting in the formation of the tricyclic terpene moiety seen in predecaturin E. The cytochrome P450 monooxygenase then catalyzes the allylic oxidation of predecaturin E, which is followed by spirocylization with concomitant loss of one molecule of water to form decaturin E. Decaturin E is the substrate of the cytochrome P450 monooxygenase olcJ which hydroxylates it at the C-29 position to form decaturin F. The short-chain dehydrogenase/reductase olcF may catalyze the oxidation of decaturin F to generate the 29-hydroxyl-27-one intermediate, and subsequent hemiacetal formation probably leads to the formation of decaturin C. The dioxygenase olcK may be a peroxisomal enzyme that catalyzes the hydroxylation of decaturin C into decaturin A once decaturin C is shuttled into the peroxisome by the MFS transporter olcL. Finally the cytochrome P450 monooxygenase olcB catalyzes the oxidative rearrangement to yield 15-deoxyoxalicine B. In the absence of olcJ, decaturin E may be shunted to a pathway in which it is oxidized to a ketone, possibly by olcF, to form decaturin D, which undergoes further allylic oxidation to yield decaturin G. Moreover, in the absence of oclK or oclL, oclB can convert decaturin C into 15-deoxyoxalicine A. The chain is Nicotinic acid-CoA ligase olcI from Penicillium canescens.